A 382-amino-acid chain; its full sequence is Mannitol-1-phosphate 5-dehydrogenase (382 aa).

4 to 15 provides a ligand contact to NAD(+); sequence AVHFGAGNIGRG.

This sequence belongs to the mannitol dehydrogenase family.

It carries out the reaction D-mannitol 1-phosphate + NAD(+) = beta-D-fructose 6-phosphate + NADH + H(+). The sequence is that of Mannitol-1-phosphate 5-dehydrogenase from Vibrio parahaemolyticus serotype O3:K6 (strain RIMD 2210633).